We begin with the raw amino-acid sequence, 24 residues long: FLPFIAGMAAKFLPKIFCAISKKC.

A disulfide bridge links Cys-18 with Cys-24.

As to expression, expressed by the skin glands.

It localises to the secreted. Antibacterial activity against Gram-positive bacterium S.aureus. The sequence is that of Brevinin-1Ba from Lithobates berlandieri (Rio Grande leopard frog).